Reading from the N-terminus, the 1026-residue chain is Isoleucine--tRNA ligase (1026 aa).

The short motif at Pro51–His61 is the 'HIGH' region element. The 'KMSKS' region motif lies at Lys591–Ser595. Lys594 contributes to the ATP binding site.

Belongs to the class-I aminoacyl-tRNA synthetase family. IleS type 2 subfamily. Monomer. Zn(2+) serves as cofactor.

It is found in the cytoplasm. It carries out the reaction tRNA(Ile) + L-isoleucine + ATP = L-isoleucyl-tRNA(Ile) + AMP + diphosphate. Functionally, catalyzes the attachment of isoleucine to tRNA(Ile). As IleRS can inadvertently accommodate and process structurally similar amino acids such as valine, to avoid such errors it has two additional distinct tRNA(Ile)-dependent editing activities. One activity is designated as 'pretransfer' editing and involves the hydrolysis of activated Val-AMP. The other activity is designated 'posttransfer' editing and involves deacylation of mischarged Val-tRNA(Ile). This chain is Isoleucine--tRNA ligase, found in Thermoplasma acidophilum (strain ATCC 25905 / DSM 1728 / JCM 9062 / NBRC 15155 / AMRC-C165).